Consider the following 524-residue polypeptide: Serine/threonine-protein kinase PAK 2 (524 aa).

The segment at 1-81 (MSDNGELEDK…PEISPPSDFE (81 aa)) is disordered. Residue serine 2 is modified to N-acetylserine. 4 positions are modified to phosphoserine: serine 2, serine 20, serine 55, and serine 58. Threonine 60 is modified (phosphothreonine). Lysine 62 is subject to N6-acetyllysine. Residue serine 64 is modified to Phosphoserine. Residues 67 to 81 (KEKERPEISPPSDFE) are compositionally biased toward basic and acidic residues. Residues 69–112 (KERPEISPPSDFEHTIHVGFDAVTGEFTGMPEQWARLLQTSNIT) are GTPase-binding. Positions 69 to 137 (KERPEISPPS…KFYDSNTVKQ (69 aa)) are autoregulatory region. A CRIB domain is found at 74–87 (ISPPSDFEHTIHVG). N6-acetyllysine is present on lysine 128. Threonine 134 is modified (phosphothreonine). Tyrosine 139 carries the phosphotyrosine modification. Serine 141 is subject to Phosphoserine. Phosphothreonine is present on threonine 143. Disordered stretches follow at residues 143-164 (TPPEKDGFPSGTPALNAKGTEA) and 169-188 (TEEEDDDEETAPPVIAPRPD). At serine 152 the chain carries Phosphoserine. Phosphothreonine is present on residues threonine 154 and threonine 169. The span at 169–178 (TEEEDDDEET) shows a compositional bias: acidic residues. The residue at position 197 (serine 197) is a Phosphoserine. Residue glycine 213 is the site of N-myristoyl glycine; in form PAK-2p34 attachment. The Nuclear localization signal motif lies at 245–251 (PKKKYTR). The region spanning 249–499 (YTRYEKIGQG…SAKELLQHPF (251 aa)) is the Protein kinase domain. ATP-binding positions include 255 to 263 (IGQGASGTV) and lysine 278. The active-site Proton acceptor is the arginine 367. At threonine 402 the chain carries Phosphothreonine; by autocatalysis.

The protein belongs to the protein kinase superfamily. STE Ser/Thr protein kinase family. STE20 subfamily. As to quaternary structure, interacts tightly with GTP-bound but not GDP-bound CDC42/p21 and RAC1. Interacts with SH3MD4. Interacts with SCRIB. Interacts with ARHGEF7 and GIT1. PAK-2p34 interacts with ARHGAP10. In terms of assembly, (Microbial infection) Interacts with and activated by HIV-1 Nef. Post-translationally, full-length PAK2 is autophosphorylated when activated by CDC42/p21. Following cleavage, both peptides, PAK-2p27 and PAK-2p34, become highly autophosphorylated, with PAK-2p27 being phosphorylated on serine and PAK-2p34 on threonine residues, respectively. Autophosphorylation of PAK-2p27 can occur in the absence of any effectors and is dependent on phosphorylation of Thr-402, because PAK-2p27 is acting as an exogenous substrate. In terms of processing, during apoptosis proteolytically cleaved by caspase-3 or caspase-3-like proteases to yield active PAK-2p34. Ubiquitinated, leading to its proteasomal degradation. Post-translationally, PAK-2p34 is myristoylated. As to expression, ubiquitously expressed. Higher levels seen in skeletal muscle, ovary, thymus and spleen.

It is found in the cytoplasm. Its subcellular location is the nucleus. It localises to the perinuclear region. The protein resides in the membrane. It catalyses the reaction L-seryl-[protein] + ATP = O-phospho-L-seryl-[protein] + ADP + H(+). The enzyme catalyses L-threonyl-[protein] + ATP = O-phospho-L-threonyl-[protein] + ADP + H(+). With respect to regulation, activated by binding small G proteins. Binding of GTP-bound CDC42 or RAC1 to the autoregulatory region releases monomers from the autoinhibited dimer, enables phosphorylation of Thr-402 and allows the kinase domain to adopt an active structure. Following caspase cleavage, autophosphorylated PAK-2p34 is constitutively active. Its function is as follows. Serine/threonine protein kinase that plays a role in a variety of different signaling pathways including cytoskeleton regulation, cell motility, cell cycle progression, apoptosis or proliferation. Acts as a downstream effector of the small GTPases CDC42 and RAC1. Activation by the binding of active CDC42 and RAC1 results in a conformational change and a subsequent autophosphorylation on several serine and/or threonine residues. Full-length PAK2 stimulates cell survival and cell growth. Phosphorylates MAPK4 and MAPK6 and activates the downstream target MAPKAPK5, a regulator of F-actin polymerization and cell migration. Phosphorylates JUN and plays an important role in EGF-induced cell proliferation. Phosphorylates many other substrates including histone H4 to promote assembly of H3.3 and H4 into nucleosomes, BAD, ribosomal protein S6, or MBP. Phosphorylates CASP7, thereby preventing its activity. Additionally, associates with ARHGEF7 and GIT1 to perform kinase-independent functions such as spindle orientation control during mitosis. On the other hand, apoptotic stimuli such as DNA damage lead to caspase-mediated cleavage of PAK2, generating PAK-2p34, an active p34 fragment that translocates to the nucleus and promotes cellular apoptosis involving the JNK signaling pathway. Caspase-activated PAK2 phosphorylates MKNK1 and reduces cellular translation. This is Serine/threonine-protein kinase PAK 2 (PAK2) from Homo sapiens (Human).